The primary structure comprises 681 residues: Minichromosome maintenance domain-containing protein 2 (681 aa).

Ser-292 is subject to Phosphoserine. The MCM domain maps to 533 to 621 (RQFTTEDFEK…LIAALLFETS (89 aa)).

Plays an important role in meiotic recombination and associated DNA double-strand break repair. The chain is Minichromosome maintenance domain-containing protein 2 (MCMDC2) from Homo sapiens (Human).